The sequence spans 481 residues: Regulator of G-protein signaling 1 (481 aa).

A disordered region spans residues 1–31 (MPALHNPSSPPPSYEAVTSYRNGNSIDSGDK). Positions 33–227 (QQCSRLMKIT…SVHEIGKSKN (195 aa)) are fungal-DR. The 81-residue stretch at 232-312 (PVYSVSSPSP…KGVSYFLTGK (81 aa)) folds into the DEP domain. The RGS domain maps to 344–474 (ILETILRKPN…AGDSLLKFLE (131 aa)).

It localises to the nucleus. The protein resides in the cytoplasm. Its function is as follows. Negatively regulates pheromone signaling during mating. Acts in a negative feedback loop that is essential for the mating process. This loop acts to down-regulate cellular sensitivity to pheromone. Activated by ste11. This chain is Regulator of G-protein signaling 1 (rgs1), found in Schizosaccharomyces pombe (strain 972 / ATCC 24843) (Fission yeast).